Consider the following 63-residue polypeptide: Large ribosomal subunit protein bL35 (63 aa).

A compositionally biased stretch (basic residues) spans 1-43; sequence MKMRTHSGAKKRLKVLSSGKVKKKSTRMRHLNSHMSSKTKRQL. The tract at residues 1–45 is disordered; it reads MKMRTHSGAKKRLKVLSSGKVKKKSTRMRHLNSHMSSKTKRQLGK.

This sequence belongs to the bacterial ribosomal protein bL35 family.

The protein is Large ribosomal subunit protein bL35 of Bdellovibrio bacteriovorus (strain ATCC 15356 / DSM 50701 / NCIMB 9529 / HD100).